We begin with the raw amino-acid sequence, 437 residues long: GTP-binding protein ERG (437 aa).

Residues 39-50 (QPNLDEPTSINE) are compositionally biased toward polar residues. A disordered region spans residues 39–65 (QPNLDEPTSINEDGSSSDSVFDSSQYP). Residues 51–62 (DGSSSDSVFDSS) are compositionally biased toward low complexity. 2 positions are modified to phosphoserine: Ser-111 and Ser-112. An Era-type G domain is found at 152–333 (KSLNVGIIGP…LMDQAVKKPW (182 aa)). Residues 160–167 (GPPNAGKS) are G1. 160–167 (GPPNAGKS) contributes to the GTP binding site. The tract at residues 186-190 (NTTTH) is G2. Positions 207 to 210 (DTPG) are G3. GTP contacts are provided by residues 207–211 (DTPGL) and 279–282 (NKVD). The tract at residues 279–282 (NKVD) is G4. A G5 region spans residues 309-311 (ISG). One can recognise a KH type-2 domain in the interval 361–437 (VHQEIPYGLE…VHLILQVKLK (77 aa)).

Belongs to the TRAFAC class TrmE-Era-EngA-EngB-Septin-like GTPase superfamily. Era GTPase family.

Its function is as follows. Has a crucial role in plant growth and development, possibly by influencing mitochondrial division. The sequence is that of GTP-binding protein ERG (ERG) from Arabidopsis thaliana (Mouse-ear cress).